Consider the following 367-residue polypeptide: Probable ATP-dependent RNA helicase MJ0669 (367 aa).

Residues 6–34 (MNFNELNLSDNILNAIRNKGFEKPTDIQM) carry the Q motif motif. The 169-residue stretch at 38–206 (PLFLNDEYNI…KKYMGDYSFI (169 aa)) folds into the Helicase ATP-binding domain. Residue 51-58 (ARTGSGKT) participates in ATP binding. Positions 154 to 157 (DEAD) match the DEAD box motif. Positions 213–367 (NIEQSYVEVN…KLKIKKLKFG (155 aa)) constitute a Helicase C-terminal domain.

This sequence belongs to the DEAD box helicase family. In terms of assembly, homodimer.

It catalyses the reaction ATP + H2O = ADP + phosphate + H(+). The polypeptide is Probable ATP-dependent RNA helicase MJ0669 (Methanocaldococcus jannaschii (strain ATCC 43067 / DSM 2661 / JAL-1 / JCM 10045 / NBRC 100440) (Methanococcus jannaschii)).